The chain runs to 615 residues: Sodium-dependent dopamine transporter (615 aa).

Positions 1–39 are disordered; that stretch reads MQLVPTDDPDEKIGRTSNGMQNATLPIDGPVNTEPKDPA. Residues 1-46 lie on the Cytoplasmic side of the membrane; sequence MQLVPTDDPDEKIGRTSNGMQNATLPIDGPVNTEPKDPAREQWSGK. Positions 15 to 24 are enriched in polar residues; the sequence is RTSNGMQNAT. A helical transmembrane segment spans residues 47–72; sequence LDFLLSVVGFAVDLGNIWRFPYLCFK. Positions 55, 57, 58, and 62 each coordinate Na(+). The Extracellular segment spans residues 73–76; that stretch reads NGGG. The helical transmembrane segment at 77 to 100 threads the bilayer; sequence VFLIPYSIMVLLTGVPLFYMELCL. Residues 101-120 lie on the Cytoplasmic side of the membrane; that stretch reads GQYYRKGAITTWGRICPLFK. A helical membrane pass occupies residues 121–151; that stretch reads GIGYCVILTAFYVDFFYNVILAWGLHYLYTS. Residues 152 to 229 lie on the Extracellular side of the membrane; sequence FSFNLPWASC…IRSVTDLGNV (78 aa). Cysteine 161 and cysteine 170 are joined by a disulfide. Residues asparagine 162 and asparagine 187 are each glycosylated (N-linked (GlcNAc...) asparagine). The helical transmembrane segment at 230-250 threads the bilayer; that stretch reads RWDIALSLFVVYLICYFSMWK. Residues 251–253 are Cytoplasmic-facing; that stretch reads GIH. The helical transmembrane segment at 254-278 threads the bilayer; that stretch reads TSGKVVWFTALFPYVVLGILFIRGV. The Extracellular portion of the chain corresponds to 279–302; the sequence is TLPGWQNGIEYYLRPNFEMLKRPS. The helical transmembrane segment at 303-328 threads the bilayer; the sequence is VWQDAATQVFFSLGPGFGVLMAYSSY. Na(+) is bound at residue serine 314. At 329-334 the chain is on the cytoplasmic side; it reads NDFHNN. The chain crosses the membrane as a helical span at residues 335 to 358; the sequence is VYVDALFTSFINCATSFLSGFVIF. Position 346 (asparagine 346) interacts with Na(+). Residues 359-398 lie on the Extracellular side of the membrane; that stretch reads SVLGYMSCKSGKPIEAVAQEGPGLVFVVYPEALSTMPYAP. Residues 399–424 form a helical membrane-spanning segment; sequence FWSVLFFLMLMTLGLDSSFGGSEAII. Leucine 411, aspartate 414, and serine 415 together coordinate Na(+). Residues 425–439 are Cytoplasmic-facing; that stretch reads TGLSDEFPILKKNRE. A helical membrane pass occupies residues 440–460; it reads VFVGCLFAFYMVIGIAMCTEG. Position 461 (glycine 461) is a topological domain, extracellular. Residues 462 to 488 traverse the membrane as a helical segment; sequence ILIMEWLIIYGTTWGLLIAVFCEAMVI. Over 489–518 the chain is Cytoplasmic; the sequence is AYIYGLRQFVHDVKEMMGFRPGNYWKFCWS. Residues 519 to 541 form a helical membrane-spanning segment; that stretch reads CAAPFILLSMITSNFINYQALTY. Topologically, residues 542-544 are extracellular; that stretch reads QDY. Residues 545–565 traverse the membrane as a helical segment; that stretch reads TYPTAANVIGIIFALSGASFI. The Cytoplasmic portion of the chain corresponds to 566-615; the sequence is PLVGIYKFVNARGNTISEKWQRVTMPYRKRPNQTEYIPIPTTQPHSDIML.

This sequence belongs to the sodium:neurotransmitter symporter (SNF) (TC 2.A.22) family.

It is found in the cell membrane. Dopamine transporter. Terminates the action of dopamine by its high affinity sodium-dependent reuptake into presynaptic terminals. Plays a role in the learned avoidance behavior of animals exposed to food that induces mitochondrial stress. This is Sodium-dependent dopamine transporter from Caenorhabditis elegans.